The following is a 536-amino-acid chain: MAVASKKIPAPDEVRIQTALLSVSDKAGIVELARALHGKGVRLVSTGGTHKALAAAGLPVSDVSELTGFPEVMDGRVKTLHPGVHGGLLAIRDDADHKAAMDEHGITGIDLAVINLYPFEEVRAQGGDYPTTVENIDIGGPAMIRASAKNHAYVTIVTDPADYSALLEEIADGTTRYAFRQKMAAKAYARTAAYDAAISNWFAEALDLAMPRHRVIGGVLKEEMRYGENPHQKAGFYVTGEQRPGVATAALLQGKQLSYNNINDTDAAFELVAEFLPEKAPACAIIKHANPCGVATAPSLTEAYRRALACDSTSAFGGIIALNQELDAETAEEIVKLFTEVIIAPSVSDEAKAIIARKPNLRLLAAGGLPDARTPGLTAKTVAGGLLVQTRDNGMVEDLELKVVTKRAPTAQELEDMKFAFKVAKHVKSNAVVYAKDGQTAGIGAGQMSRVDSARIAAIKAEEAARAHGLAAPLTRGSAVASEAFLPFADGLLSAIAAGATAVIQPGGSMRDEEVIAAANEHNVAMVFTGMRHFRH.

An MGS-like domain is found at 8–158 (IPAPDEVRIQ…KNHAYVTIVT (151 aa)).

The protein belongs to the PurH family.

It carries out the reaction (6R)-10-formyltetrahydrofolate + 5-amino-1-(5-phospho-beta-D-ribosyl)imidazole-4-carboxamide = 5-formamido-1-(5-phospho-D-ribosyl)imidazole-4-carboxamide + (6S)-5,6,7,8-tetrahydrofolate. The catalysed reaction is IMP + H2O = 5-formamido-1-(5-phospho-D-ribosyl)imidazole-4-carboxamide. It functions in the pathway purine metabolism; IMP biosynthesis via de novo pathway; 5-formamido-1-(5-phospho-D-ribosyl)imidazole-4-carboxamide from 5-amino-1-(5-phospho-D-ribosyl)imidazole-4-carboxamide (10-formyl THF route): step 1/1. Its pathway is purine metabolism; IMP biosynthesis via de novo pathway; IMP from 5-formamido-1-(5-phospho-D-ribosyl)imidazole-4-carboxamide: step 1/1. The chain is Bifunctional purine biosynthesis protein PurH from Sinorhizobium fredii (strain NBRC 101917 / NGR234).